The chain runs to 482 residues: Scarecrow-like protein 3 (482 aa).

The GRAS domain occupies 45 to 479 (LKPEERGLYL…RPLYSVSAWR (435 aa)). The leucine repeat I (LRI) stretch occupies residues 52–115 (LYLIHLLLTC…ILKSWPGLYK (64 aa)). Positions 134–199 (RRLFFEMFPI…EGPPHLRITG (66 aa)) are VHIID. Positions 165-169 (VHVID) match the VHIID motif. The segment at 209–241 (QMAHRLIEEAEKLDIPFQFNPVVSRLDCLNVEQ) is leucine repeat II (LRII). Residues 250 to 401 (LAVSSVLQLH…KMLFGEEIKN (152 aa)) form a PFYRE region. The disordered stretch occupies residues 302–324 (ENDMSNNNGYSPSGDSASSLPLP). A compositionally biased stretch (polar residues) spans 305 to 324 (MSNNNGYSPSGDSASSLPLP). An SAW region spans residues 404–479 (SCEGFERRER…RPLYSVSAWR (76 aa)).

This sequence belongs to the GRAS family. Binds to zinc finger proteins MGP/IDD3, IDD4, IDD5, BIB/IDD9 and JKD/IDD10. In terms of tissue distribution, expressed in seedlings, root epidermis, leaves, flowers and siliques.

Its subcellular location is the nucleus. In terms of biological role, probable transcription factor involved in plant development. This Arabidopsis thaliana (Mouse-ear cress) protein is Scarecrow-like protein 3.